Consider the following 340-residue polypeptide: Armadillo repeat-containing protein 12 (340 aa).

The interval 1–101 is interaction with TBC1D15; it reads MGKTIPRFLE…NITRCVYLLE (101 aa). 3 ARM repeats span residues 100-139, 179-218, and 278-318; these read LEAE…AFSG, LPDY…YLAQ, and SLHE…SLQC. The tract at residues 321–340 is disordered; sequence DLGSRPSSCRPSHSCFKTGK. Residues 324–340 are compositionally biased toward low complexity; it reads SRPSSCRPSHSCFKTGK.

As to quaternary structure, interacts with TBC1D15, TBC1D21, GK2 and IMMT. Interacts with VDAC2 and VDAC3 in a TBC1D21-dependent manner. Interacts (via ARM domains) with RBBP4. As to expression, testis-specific.

The protein resides in the nucleus. The protein localises to the mitochondrion outer membrane. In terms of biological role, essential for male fertility and sperm mitochondrial sheath formation. Required for proper mitochondrial elongation and coiling along the flagellum during the formation of the mitochondrial sheath. Facilitates the growth and aggressiveness of neuroblastoma cells. Increases the EZH2 activity and H3K27me3 levels in a RBBP4-dependent manner, and facilitates the enrichment of polycomb repressive complex 2 and H3K27me3 on gene promoters, resulting in transcriptional repression of tumor suppressors affecting the proliferation, invasion, and metastasis of tumor cells. In Mus musculus (Mouse), this protein is Armadillo repeat-containing protein 12 (Armc12).